The primary structure comprises 465 residues: GTPase Der (465 aa).

2 EngA-type G domains span residues phenylalanine 3–tyrosine 166 and isoleucine 184–asparagine 358. GTP-binding positions include glycine 9–serine 16, aspartate 56–isoleucine 60, asparagine 118–aspartate 121, glycine 190–serine 197, aspartate 237–valine 241, and asparagine 302–aspartate 305. One can recognise a KH-like domain in the interval lysine 359–glutamate 443. The disordered stretch occupies residues phenylalanine 446–lysine 465.

This sequence belongs to the TRAFAC class TrmE-Era-EngA-EngB-Septin-like GTPase superfamily. EngA (Der) GTPase family. In terms of assembly, associates with the 50S ribosomal subunit.

In terms of biological role, GTPase that plays an essential role in the late steps of ribosome biogenesis. The sequence is that of GTPase Der from Francisella tularensis subsp. holarctica (strain FTNF002-00 / FTA).